A 500-amino-acid polypeptide reads, in one-letter code: Cryptochrome DASH (500 aa).

Residues 4–138 (KTVLVWYRND…PVRSFWGTTL (135 aa)) enclose the Photolyase/cryptochrome alpha/beta domain.

The protein belongs to the DNA photolyase class-1 family. The cofactor is FAD. (6R)-5,10-methylene-5,6,7,8-tetrahydrofolate serves as cofactor.

Its function is as follows. May have a photoreceptor function. Binds DNA; probably functions as a transcriptional repressor. This is Cryptochrome DASH (cry) from Gloeobacter violaceus (strain ATCC 29082 / PCC 7421).